A 390-amino-acid chain; its full sequence is Mevalonate kinase (390 aa).

ATP-binding positions include lysine 16, serine 130, and 135-141 (GAGLGSS). Residues serine 141 and glutamate 193 each contribute to the Mg(2+) site. Aspartate 204 acts as the Proton acceptor in catalysis.

The protein belongs to the GHMP kinase family. Mevalonate kinase subfamily. Mg(2+) is required as a cofactor.

It localises to the cytoplasm. The catalysed reaction is (R)-mevalonate + ATP = (R)-5-phosphomevalonate + ADP + H(+). It functions in the pathway isoprenoid biosynthesis; isopentenyl diphosphate biosynthesis via mevalonate pathway; isopentenyl diphosphate from (R)-mevalonate: step 1/3. Catalyzes the phosphorylation of mevalonate to mevalonate 5-phosphate, a key step in isoprenoid biosynthesis. This Dictyostelium discoideum (Social amoeba) protein is Mevalonate kinase.